Reading from the N-terminus, the 198-residue chain is Sortase D (198 aa).

A helical membrane pass occupies residues 7–25 (LFIIAAGLVIAGYGGFKLI). Over residues 36–46 (KEAKLAAKKPQ) the composition is skewed to basic and acidic residues. Residues 36–67 (KEAKLAAKKPQEASGTKNSTDQAKNKASFKPE) form a disordered region. The segment covering 48–57 (ASGTKNSTDQ) has biased composition (polar residues). Catalysis depends on histidine 119, which acts as the Proton donor/acceptor. Cysteine 177 acts as the Acyl-thioester intermediate in catalysis.

It belongs to the bacterial sortase family. Class D subfamily.

It is found in the cell membrane. Functionally, transpeptidase that anchors surface proteins to the cell wall. Recognizes and modifies its substrate by proteolytic cleavage of a C-terminal sorting signal. Following cleavage, a covalent intermediate is formed via a thioester bond between the sortase and its substrate, which is then transferred and covalently attached to the cell wall. This sortase recognizes a Leu-Pro-Asp-Thr-Ser/Ala (LPDTS/A) motif. It has two substrates, YhcR and YfkN. The polypeptide is Sortase D (Bacillus subtilis (strain 168)).